Consider the following 451-residue polypeptide: POU domain, class 3, transcription factor 1 (451 aa).

Disordered stretches follow at residues 1–21 (MATTAQYLPRGPGGGAGGTGP), 69–114 (AHPQ…GFHA), 127–154 (AWAQGSTAHHLGPAMSPSPGASGGHQPQ), 186–253 (GLHH…PSSD), and 395–451 (KRMT…GSVQ). Gly residues-rich tracts occupy residues 11-20 (GPGGGAGGTG), 76-85 (TGGGGGGDWA), and 95-112 (AGGGGTGRADDGGGGGGF). Residues 190–199 (ALHEDGHEAQ) show a composition bias toward basic and acidic residues. Over residues 220–232 (AGGLHAAAAHLHP) the composition is skewed to low complexity. Residues 247 to 321 (EDAPSSDDLE…LLNKWLEETD (75 aa)) form the POU-specific domain. Positions 339 to 398 (KRKKRTSIEVGVKGALESHFLKCPKPSAHEITGLADSLQLEKEVVRVWFCNRRQKEKRMT) form a DNA-binding region, homeobox. Residues 427–436 (PSAPPPPPPA) are compositionally biased toward pro residues.

This sequence belongs to the POU transcription factor family. Class-3 subfamily. In terms of tissue distribution, expressed in embryonal stem cells and in the developing brain.

Its subcellular location is the nucleus. In terms of biological role, transcription factor that binds to the octamer motif (5'-ATTTGCAT-3'). Acts as a transcriptional activator when binding cooperatively with SOX4, SOX11, or SOX12 to gene promoters. Acts as a transcriptional repressor of myelin-specific genes. The chain is POU domain, class 3, transcription factor 1 (POU3F1) from Homo sapiens (Human).